We begin with the raw amino-acid sequence, 191 residues long: Thymidine kinase (191 aa).

ATP contacts are provided by residues 9–16 (GSMNSGKT) and 85–88 (DESQ). Glutamate 86 acts as the Proton acceptor in catalysis. Residues cysteine 143, cysteine 146, cysteine 181, and cysteine 184 each contribute to the Zn(2+) site.

This sequence belongs to the thymidine kinase family. Homotetramer.

It localises to the cytoplasm. The enzyme catalyses thymidine + ATP = dTMP + ADP + H(+). The chain is Thymidine kinase from Listeria monocytogenes serovar 1/2a (strain ATCC BAA-679 / EGD-e).